The primary structure comprises 746 residues: Alpha-galactosidase 2 (746 aa).

An N-terminal signal peptide occupies residues 1 to 26 (MLGAPSPRRLADVLAVTAGLVASVRA). 8 N-linked (GlcNAc...) asparagine glycosylation sites follow: asparagine 43, asparagine 156, asparagine 180, asparagine 188, asparagine 360, asparagine 427, asparagine 446, and asparagine 495. Catalysis depends on aspartate 504, which acts as the Nucleophile. Aspartate 566 acts as the Proton donor in catalysis. Asparagine 714 is a glycosylation site (N-linked (GlcNAc...) asparagine).

This sequence belongs to the glycosyl hydrolase 27 family.

It is found in the secreted. The catalysed reaction is Hydrolysis of terminal, non-reducing alpha-D-galactose residues in alpha-D-galactosides, including galactose oligosaccharides, galactomannans and galactolipids.. Its function is as follows. Alpha-galactosidase involved in the degradation of simple oligosaccharides like melibiose, raffinose and stachyose, and of polymeric galacto(gluco)mannans. This Hypocrea jecorina (Trichoderma reesei) protein is Alpha-galactosidase 2 (agl2).